Reading from the N-terminus, the 70-residue chain is Large ribosomal subunit protein bL31 (70 aa).

Zn(2+)-binding residues include C16, C18, C36, and C39.

Belongs to the bacterial ribosomal protein bL31 family. Type A subfamily. In terms of assembly, part of the 50S ribosomal subunit. It depends on Zn(2+) as a cofactor.

Its function is as follows. Binds the 23S rRNA. The polypeptide is Large ribosomal subunit protein bL31 (Fervidobacterium nodosum (strain ATCC 35602 / DSM 5306 / Rt17-B1)).